An 89-amino-acid polypeptide reads, in one-letter code: Small ribosomal subunit protein uS14 (89 aa).

Belongs to the universal ribosomal protein uS14 family. As to quaternary structure, part of the 30S ribosomal subunit. Contacts proteins S3 and S10.

In terms of biological role, binds 16S rRNA, required for the assembly of 30S particles and may also be responsible for determining the conformation of the 16S rRNA at the A site. The polypeptide is Small ribosomal subunit protein uS14 (Flavobacterium psychrophilum (strain ATCC 49511 / DSM 21280 / CIP 103535 / JIP02/86)).